We begin with the raw amino-acid sequence, 100 residues long: Aspartyl/glutamyl-tRNA(Asn/Gln) amidotransferase subunit C (100 aa).

This sequence belongs to the GatC family. Heterotrimer of A, B and C subunits.

The enzyme catalyses L-glutamyl-tRNA(Gln) + L-glutamine + ATP + H2O = L-glutaminyl-tRNA(Gln) + L-glutamate + ADP + phosphate + H(+). It catalyses the reaction L-aspartyl-tRNA(Asn) + L-glutamine + ATP + H2O = L-asparaginyl-tRNA(Asn) + L-glutamate + ADP + phosphate + 2 H(+). Its function is as follows. Allows the formation of correctly charged Asn-tRNA(Asn) or Gln-tRNA(Gln) through the transamidation of misacylated Asp-tRNA(Asn) or Glu-tRNA(Gln) in organisms which lack either or both of asparaginyl-tRNA or glutaminyl-tRNA synthetases. The reaction takes place in the presence of glutamine and ATP through an activated phospho-Asp-tRNA(Asn) or phospho-Glu-tRNA(Gln). The chain is Aspartyl/glutamyl-tRNA(Asn/Gln) amidotransferase subunit C from Staphylococcus epidermidis (strain ATCC 35984 / DSM 28319 / BCRC 17069 / CCUG 31568 / BM 3577 / RP62A).